We begin with the raw amino-acid sequence, 217 residues long: Pyrrolidone-carboxylate peptidase (217 aa).

Residues Glu78, Cys141, and His168 contribute to the active site.

Belongs to the peptidase C15 family. Homotetramer.

Its subcellular location is the cytoplasm. It carries out the reaction Release of an N-terminal pyroglutamyl group from a polypeptide, the second amino acid generally not being Pro.. Its function is as follows. Removes 5-oxoproline from various penultimate amino acid residues except L-proline. In Treponema denticola (strain ATCC 35405 / DSM 14222 / CIP 103919 / JCM 8153 / KCTC 15104), this protein is Pyrrolidone-carboxylate peptidase.